Reading from the N-terminus, the 378-residue chain is Protein KlaB (378 aa).

It belongs to the TelA family.

In terms of biological role, belongs to the kla operon, which is associated with cryptic tellurite resistance, and IncW plasmid fertility inhibition. The sequence is that of Protein KlaB (klaB) from Escherichia coli.